The sequence spans 226 residues: Tyramine N-feruloyltransferase 10/30 (226 aa).

The interval 29 to 45 is important in binding site and for catalytic activity; the sequence is HIYKLFYQIHEYHNYTH. Positions 72 to 222 constitute an N-acetyltransferase domain; it reads VLLLEVSPTP…VGDALQKYAD (151 aa).

Belongs to the acetyltransferase family. In terms of assembly, homodimer.

It is found in the cytoplasm. It carries out the reaction tyramine + (E)-feruloyl-CoA = N-[(E)-feruloyl]tyramine + CoA + H(+). Its activity is regulated as follows. Inhibited by (2-hydroxyphenyl)amino sulfinyl acetic acid 1,1-dimethylethyl ester, by DEPC and by N-ethylmaleimide. Its function is as follows. Synthesizes amides which are involved in stress response in the cell wall. Catalyzes the synthesis of hydroxycinnamic acid amides from hydroxycinnamoyl-CoA thioesters and various hydroxyphenylethylamines such as 4-coumaroyl-CoA and sinapoyl-CoA. The protein is Tyramine N-feruloyltransferase 10/30 (THT10) of Nicotiana tabacum (Common tobacco).